The sequence spans 93 residues: NAD(P)H-quinone oxidoreductase subunit 4L, chloroplastic (93 aa).

2 helical membrane-spanning segments follow: residues M1–I21 and I60–A80.

This sequence belongs to the complex I subunit 4L family. As to quaternary structure, NDH is composed of at least 16 different subunits, 5 of which are encoded in the nucleus.

The protein resides in the plastid. The protein localises to the chloroplast thylakoid membrane. It catalyses the reaction a plastoquinone + NADH + (n+1) H(+)(in) = a plastoquinol + NAD(+) + n H(+)(out). It carries out the reaction a plastoquinone + NADPH + (n+1) H(+)(in) = a plastoquinol + NADP(+) + n H(+)(out). Functionally, NDH shuttles electrons from NAD(P)H:plastoquinone, via FMN and iron-sulfur (Fe-S) centers, to quinones in the photosynthetic chain and possibly in a chloroplast respiratory chain. The immediate electron acceptor for the enzyme in this species is believed to be plastoquinone. Couples the redox reaction to proton translocation, and thus conserves the redox energy in a proton gradient. The chain is NAD(P)H-quinone oxidoreductase subunit 4L, chloroplastic from Anthoceros angustus (Hornwort).